The chain runs to 298 residues: 4-hydroxy-tetrahydrodipicolinate synthase (298 aa).

Pyruvate is bound at residue Thr-48. Tyr-137 (proton donor/acceptor) is an active-site residue. Lys-166 serves as the catalytic Schiff-base intermediate with substrate. Ile-207 contacts pyruvate.

This sequence belongs to the DapA family. As to quaternary structure, homotetramer; dimer of dimers.

The protein localises to the cytoplasm. It carries out the reaction L-aspartate 4-semialdehyde + pyruvate = (2S,4S)-4-hydroxy-2,3,4,5-tetrahydrodipicolinate + H2O + H(+). Its pathway is amino-acid biosynthesis; L-lysine biosynthesis via DAP pathway; (S)-tetrahydrodipicolinate from L-aspartate: step 3/4. Catalyzes the condensation of (S)-aspartate-beta-semialdehyde [(S)-ASA] and pyruvate to 4-hydroxy-tetrahydrodipicolinate (HTPA). The sequence is that of 4-hydroxy-tetrahydrodipicolinate synthase from Campylobacter jejuni subsp. jejuni serotype O:6 (strain 81116 / NCTC 11828).